Here is a 300-residue protein sequence, read N- to C-terminus: Iron-dependent extradiol dioxygenase (300 aa).

2 VOC domains span residues 5–120 (SLAY…AFHG) and 142–270 (GLGH…FGCE). His145 provides a ligand contact to Fe cation. Substrate contacts are provided by His200, His215, Asp250, and Tyr256. His215 lines the Fe cation pocket. Glu266 serves as a coordination point for Fe cation.

This sequence belongs to the extradiol ring-cleavage dioxygenase family. Homodimer. The cofactor is Fe(2+).

It catalyses the reaction 3,4-dihydroxy-9,10-secoandrosta-1,3,5(10)-triene-9,17-dione + O2 = (1E,2Z)-3-hydroxy-5,9,17-trioxo-4,5:9,10-disecoandrosta-1(10),2-dien-4-oate + H(+). It participates in steroid metabolism; cholesterol metabolism. Functionally, catalyzes the meta-cleavage of 3,4-dihydroxy-9,10-seconandrost-1,3,5(10)-triene-9,17-dione (3,4-DHSA) to produce 4,5-9,10-diseco-3-hydroxy-5,9,17-trioxoandrosta-1(10),2-diene-4-oic acid (4,9-DSHA). Also involved in biphenyl and polychlorinated biphenyls (PCBs) degradation. This chain is Iron-dependent extradiol dioxygenase (hsaC), found in Rhodococcus jostii (strain RHA1).